The sequence spans 431 residues: Adenylosuccinate synthetase (431 aa).

Residues 12 to 18 (GDEGKGK) and 40 to 42 (GHT) contribute to the GTP site. Aspartate 13 functions as the Proton acceptor in the catalytic mechanism. Residues aspartate 13 and glycine 40 each coordinate Mg(2+). IMP-binding positions include 13–16 (DEGK), 38–41 (NAGH), threonine 130, arginine 144, glutamine 225, threonine 240, and arginine 304. The Proton donor role is filled by histidine 41. 300–306 (ATTGRPR) is a substrate binding site. Residues arginine 306, 332 to 334 (KLD), and 414 to 416 (SVG) each bind GTP.

It belongs to the adenylosuccinate synthetase family. Homodimer. Requires Mg(2+) as cofactor.

It is found in the cytoplasm. The catalysed reaction is IMP + L-aspartate + GTP = N(6)-(1,2-dicarboxyethyl)-AMP + GDP + phosphate + 2 H(+). It participates in purine metabolism; AMP biosynthesis via de novo pathway; AMP from IMP: step 1/2. In terms of biological role, plays an important role in the de novo pathway of purine nucleotide biosynthesis. Catalyzes the first committed step in the biosynthesis of AMP from IMP. In Anaeromyxobacter sp. (strain Fw109-5), this protein is Adenylosuccinate synthetase.